Reading from the N-terminus, the 164-residue chain is CASP-like protein 1C1 (164 aa).

The Cytoplasmic segment spans residues 1-15 (MGDVEIPPLVKQIVR). Residues 16–36 (GLRGLAFLATILATSFMAASH) traverse the membrane as a helical segment. At 37 to 56 (ERAIFPFDYKADYTDLMLFK) the chain is on the extracellular side. A helical transmembrane segment spans residues 57 to 77 (AFLGANIAASLYSFFFVCLPP). Residues 78–83 (KSLLWR) are Cytoplasmic-facing. The chain crosses the membrane as a helical span at residues 84 to 104 (LAIVLDVIMFGLLVAMDSAAI). The Extracellular portion of the chain corresponds to 105 to 132 (AAAYLHKHGDSQAFWPPICSQVPTYCYR). Residues 133-153 (VILAISIGFGGVFMFLLIIII) traverse the membrane as a helical segment. The Cytoplasmic portion of the chain corresponds to 154 to 164 (SISVILNPLLV).

This sequence belongs to the Casparian strip membrane proteins (CASP) family. As to quaternary structure, homodimer and heterodimers.

The protein localises to the cell membrane. The protein is CASP-like protein 1C1 of Populus trichocarpa (Western balsam poplar).